Here is a 195-residue protein sequence, read N- to C-terminus: Recombination protein RecR (195 aa).

Residues 53–68 form a C4-type zinc finger; sequence CTICHNLDTISPCSIC. Residues 76 to 171 form the Toprim domain; that stretch reads SIICVVEELG…KVTRLACGIP (96 aa).

Belongs to the RecR family.

May play a role in DNA repair. It seems to be involved in an RecBC-independent recombinational process of DNA repair. It may act with RecF and RecO. The chain is Recombination protein RecR from Anaplasma marginale (strain St. Maries).